The sequence spans 140 residues: Biopolymer transport protein exbD1 (140 aa).

At 1-16 (MAFSSGNSGGPMADIN) the chain is on the cytoplasmic side. A helical transmembrane segment spans residues 17 to 37 (VTPLVDVMLVLLIIFIITAPL). At 38–140 (MSHKVKVELP…GFVATKEKGQ (103 aa)) the chain is on the periplasmic side.

It belongs to the ExbD/TolR family. As to quaternary structure, the accessory proteins ExbB and ExbD seem to form a complex with TonB.

The protein resides in the cell inner membrane. Its function is as follows. Involved in the TonB-dependent energy-dependent transport of various receptor-bound substrates. This Xanthomonas campestris pv. campestris (strain B100) protein is Biopolymer transport protein exbD1 (exbD1).